The following is a 558-amino-acid chain: NXPE family member 2 (558 aa).

A helical transmembrane segment spans residues 17–37; sequence ASARKLFLIVLIIFVFWVVFM.

Belongs to the NXPE family.

The protein resides in the membrane. In Mus musculus (Mouse), this protein is NXPE family member 2 (Nxpe2).